Here is a 107-residue protein sequence, read N- to C-terminus: uncharacterized protein (107 aa).

This is an uncharacterized protein from Bacillus subtilis (strain 168).